We begin with the raw amino-acid sequence, 281 residues long: UPF0294 protein VP2298 (281 aa).

It belongs to the UPF0294 family.

It localises to the cytoplasm. The polypeptide is UPF0294 protein VP2298 (Vibrio parahaemolyticus serotype O3:K6 (strain RIMD 2210633)).